A 313-amino-acid chain; its full sequence is Phosphate import ATP-binding protein PstB 2 (313 aa).

Positions 1-33 are enriched in polar residues; it reads MSDSINTEPSTDTQTNGERTVETTSPSAETTAG. Residues 1–40 are disordered; that stretch reads MSDSINTEPSTDTQTNGERTVETTSPSAETTAGESEEQVR. Residues 54 to 308 form the ABC transporter domain; the sequence is LSVENLDVWY…PESQRVEDYI (255 aa). 86 to 93 contributes to the ATP binding site; it reads GPSGCGKS.

It belongs to the ABC transporter superfamily. Phosphate importer (TC 3.A.1.7) family. The complex is composed of two ATP-binding proteins (PstB), two transmembrane proteins (PstC and PstA) and a solute-binding protein (PstS).

It localises to the cell membrane. The enzyme catalyses phosphate(out) + ATP + H2O = ADP + 2 phosphate(in) + H(+). Functionally, part of the ABC transporter complex PstSACB involved in phosphate import. Responsible for energy coupling to the transport system. The sequence is that of Phosphate import ATP-binding protein PstB 2 from Haloarcula marismortui (strain ATCC 43049 / DSM 3752 / JCM 8966 / VKM B-1809) (Halobacterium marismortui).